The chain runs to 246 residues: tRNA (guanine-N(1)-)-methyltransferase (246 aa).

S-adenosyl-L-methionine is bound by residues Gly113 and 133 to 138 (IGDFVM).

This sequence belongs to the RNA methyltransferase TrmD family. In terms of assembly, homodimer.

It localises to the cytoplasm. The catalysed reaction is guanosine(37) in tRNA + S-adenosyl-L-methionine = N(1)-methylguanosine(37) in tRNA + S-adenosyl-L-homocysteine + H(+). Specifically methylates guanosine-37 in various tRNAs. This Vibrio atlanticus (strain LGP32) (Vibrio splendidus (strain Mel32)) protein is tRNA (guanine-N(1)-)-methyltransferase.